The sequence spans 1400 residues: DNA-directed RNA polymerase subunit beta' (1400 aa).

Positions 71, 73, 86, and 89 each coordinate Zn(2+). Residues Asp-462, Asp-464, and Asp-466 each contribute to the Mg(2+) site. 4 residues coordinate Zn(2+): Cys-810, Cys-884, Cys-891, and Cys-894.

This sequence belongs to the RNA polymerase beta' chain family. In terms of assembly, the RNAP catalytic core consists of 2 alpha, 1 beta, 1 beta' and 1 omega subunit. When a sigma factor is associated with the core the holoenzyme is formed, which can initiate transcription. Requires Mg(2+) as cofactor. Zn(2+) serves as cofactor.

It catalyses the reaction RNA(n) + a ribonucleoside 5'-triphosphate = RNA(n+1) + diphosphate. In terms of biological role, DNA-dependent RNA polymerase catalyzes the transcription of DNA into RNA using the four ribonucleoside triphosphates as substrates. The polypeptide is DNA-directed RNA polymerase subunit beta' (Rhodopseudomonas palustris (strain BisA53)).